A 485-amino-acid chain; its full sequence is 1-aminocyclopropane-1-carboxylate synthase 2 (485 aa).

Substrate-binding residues include Glu55 and Tyr92. Lys278 carries the N6-(pyridoxal phosphate)lysine modification. Ser460 is subject to Phosphoserine.

Belongs to the class-I pyridoxal-phosphate-dependent aminotransferase family. In terms of assembly, homodimer and heterodimer. In vivo, the relevance of heterodimerization with other ACS enzymes is however unsure. It depends on pyridoxal 5'-phosphate as a cofactor. Post-translationally, phosphorylated on Ser 460; phosphorylation may regulate its turnover. In terms of processing, may be processed at its C-terminus.

The catalysed reaction is S-adenosyl-L-methionine = 1-aminocyclopropane-1-carboxylate + S-methyl-5'-thioadenosine + H(+). It participates in alkene biosynthesis; ethylene biosynthesis via S-adenosyl-L-methionine; ethylene from S-adenosyl-L-methionine: step 1/2. Its function is as follows. 1-aminocyclopropane-1-carboxylate synthase (ACS) enzymes catalyze the conversion of S-adenosyl-L-methionine (SAM) into 1-aminocyclopropane-1-carboxylate (ACC), a direct precursor of ethylene. The sequence is that of 1-aminocyclopropane-1-carboxylate synthase 2 (ACS2) from Solanum lycopersicum (Tomato).